Here is a 45-residue protein sequence, read N- to C-terminus: MEAALLLAKLPEAYQIFDPLVDVLPIIPLFFLALAFVWQAAVGFK.

The propeptide occupies 1 to 8; sequence MEAALLLA. The helical transmembrane segment at 24–44 threads the bilayer; that stretch reads LPIIPLFFLALAFVWQAAVGF.

The protein belongs to the PsbK family. PSII is composed of 1 copy each of membrane proteins PsbA, PsbB, PsbC, PsbD, PsbE, PsbF, PsbH, PsbI, PsbJ, PsbK, PsbL, PsbM, PsbT, PsbX, PsbY, PsbZ, Psb30/Ycf12, peripheral proteins PsbO, CyanoQ (PsbQ), PsbU, PsbV and a large number of cofactors. It forms dimeric complexes.

It is found in the cellular thylakoid membrane. One of the components of the core complex of photosystem II (PSII). PSII is a light-driven water:plastoquinone oxidoreductase that uses light energy to abstract electrons from H(2)O, generating O(2) and a proton gradient subsequently used for ATP formation. It consists of a core antenna complex that captures photons, and an electron transfer chain that converts photonic excitation into a charge separation. The polypeptide is Photosystem II reaction center protein K (Rippkaea orientalis (strain PCC 8801 / RF-1) (Cyanothece sp. (strain PCC 8801))).